Here is a 165-residue protein sequence, read N- to C-terminus: SsrA-binding protein (165 aa).

The segment covering 1-10 (MSKKGKKKSK) has biased composition (basic residues). The tract at residues 1–21 (MSKKGKKKSKNNSSVDGNRRL) is disordered.

Belongs to the SmpB family.

The protein resides in the cytoplasm. Its function is as follows. Required for rescue of stalled ribosomes mediated by trans-translation. Binds to transfer-messenger RNA (tmRNA), required for stable association of tmRNA with ribosomes. tmRNA and SmpB together mimic tRNA shape, replacing the anticodon stem-loop with SmpB. tmRNA is encoded by the ssrA gene; the 2 termini fold to resemble tRNA(Ala) and it encodes a 'tag peptide', a short internal open reading frame. During trans-translation Ala-aminoacylated tmRNA acts like a tRNA, entering the A-site of stalled ribosomes, displacing the stalled mRNA. The ribosome then switches to translate the ORF on the tmRNA; the nascent peptide is terminated with the 'tag peptide' encoded by the tmRNA and targeted for degradation. The ribosome is freed to recommence translation, which seems to be the essential function of trans-translation. This is SsrA-binding protein from Prochlorococcus marinus (strain NATL1A).